The chain runs to 152 residues: 6,7-dimethyl-8-ribityllumazine synthase (152 aa).

5-amino-6-(D-ribitylamino)uracil is bound by residues Phe21, 55-57, and 79-81; these read AFE and CVI. Position 84-85 (84-85) interacts with (2S)-2-hydroxy-3-oxobutyl phosphate; the sequence is AT. The active-site Proton donor is the His87. Phe112 is a 5-amino-6-(D-ribitylamino)uracil binding site. Arg126 is a (2S)-2-hydroxy-3-oxobutyl phosphate binding site.

It belongs to the DMRL synthase family. Forms an icosahedral capsid composed of 60 subunits, arranged as a dodecamer of pentamers.

The catalysed reaction is (2S)-2-hydroxy-3-oxobutyl phosphate + 5-amino-6-(D-ribitylamino)uracil = 6,7-dimethyl-8-(1-D-ribityl)lumazine + phosphate + 2 H2O + H(+). Its pathway is cofactor biosynthesis; riboflavin biosynthesis; riboflavin from 2-hydroxy-3-oxobutyl phosphate and 5-amino-6-(D-ribitylamino)uracil: step 1/2. In terms of biological role, catalyzes the formation of 6,7-dimethyl-8-ribityllumazine by condensation of 5-amino-6-(D-ribitylamino)uracil with 3,4-dihydroxy-2-butanone 4-phosphate. This is the penultimate step in the biosynthesis of riboflavin. This chain is 6,7-dimethyl-8-ribityllumazine synthase, found in Staphylococcus carnosus (strain TM300).